The chain runs to 189 residues: Ribonuclease M5 (189 aa).

The 84-residue stretch at 8 to 91 folds into the Toprim domain; sequence KEIIVVEGKD…AFLPKEEALA (84 aa). 3 residues coordinate Mg(2+): E14, D60, and D62.

The protein belongs to the ribonuclease M5 family. Mg(2+) serves as cofactor.

The protein resides in the cytoplasm. It catalyses the reaction Endonucleolytic cleavage of RNA, removing 21 and 42 nucleotides, respectively, from the 5'- and 3'-termini of a 5S-rRNA precursor.. In terms of biological role, required for correct processing of both the 5' and 3' ends of 5S rRNA precursor. Cleaves both sides of a double-stranded region yielding mature 5S rRNA in one step. The chain is Ribonuclease M5 from Bacillus cereus (strain ATCC 14579 / DSM 31 / CCUG 7414 / JCM 2152 / NBRC 15305 / NCIMB 9373 / NCTC 2599 / NRRL B-3711).